A 172-amino-acid polypeptide reads, in one-letter code: 3-hydroxydecanoyl-[acyl-carrier-protein] dehydratase (172 aa).

His71 is a catalytic residue.

Belongs to the thioester dehydratase family. FabA subfamily. Homodimer.

The protein localises to the cytoplasm. It carries out the reaction a (3R)-hydroxyacyl-[ACP] = a (2E)-enoyl-[ACP] + H2O. The catalysed reaction is (3R)-hydroxydecanoyl-[ACP] = (2E)-decenoyl-[ACP] + H2O. The enzyme catalyses (2E)-decenoyl-[ACP] = (3Z)-decenoyl-[ACP]. It functions in the pathway lipid metabolism; fatty acid biosynthesis. Its function is as follows. Necessary for the introduction of cis unsaturation into fatty acids. Catalyzes the dehydration of (3R)-3-hydroxydecanoyl-ACP to E-(2)-decenoyl-ACP and then its isomerization to Z-(3)-decenoyl-ACP. Can catalyze the dehydratase reaction for beta-hydroxyacyl-ACPs with saturated chain lengths up to 16:0, being most active on intermediate chain length. In Salmonella choleraesuis (strain SC-B67), this protein is 3-hydroxydecanoyl-[acyl-carrier-protein] dehydratase.